A 141-amino-acid polypeptide reads, in one-letter code: HTH-type transcriptional repressor NsrR (141 aa).

In terms of domain architecture, HTH rrf2-type spans 2–129; sequence QLTSFTDYGL…DNYTLADLVE (128 aa). Positions 28-51 form a DNA-binding region, H-T-H motif; sequence ISEVTEVYGVSRNHMVKIINQLSR. Positions 91, 96, and 102 each coordinate [2Fe-2S] cluster.

Requires [2Fe-2S] cluster as cofactor.

Its function is as follows. Nitric oxide-sensitive repressor of genes involved in protecting the cell against nitrosative stress. May require iron for activity. This Klebsiella pneumoniae subsp. pneumoniae (strain ATCC 700721 / MGH 78578) protein is HTH-type transcriptional repressor NsrR.